Here is a 369-residue protein sequence, read N- to C-terminus: uncharacterized protein (369 aa).

It belongs to the Gfo/Idh/MocA family.

This is an uncharacterized protein from Schizosaccharomyces pombe (strain 972 / ATCC 24843) (Fission yeast).